We begin with the raw amino-acid sequence, 226 residues long: 7-cyano-7-deazaguanine synthase (226 aa).

8-18 (LSGGLDSTTVL) is an ATP binding site. 4 residues coordinate Zn(2+): Cys-190, Cys-198, Cys-201, and Cys-204.

This sequence belongs to the QueC family. In terms of assembly, homodimer. Zn(2+) is required as a cofactor.

The enzyme catalyses 7-carboxy-7-deazaguanine + NH4(+) + ATP = 7-cyano-7-deazaguanine + ADP + phosphate + H2O + H(+). The protein operates within purine metabolism; 7-cyano-7-deazaguanine biosynthesis. Its function is as follows. Catalyzes the ATP-dependent conversion of 7-carboxy-7-deazaguanine (CDG) to 7-cyano-7-deazaguanine (preQ(0)). The sequence is that of 7-cyano-7-deazaguanine synthase from Clostridium kluyveri (strain ATCC 8527 / DSM 555 / NBRC 12016 / NCIMB 10680 / K1).